The sequence spans 390 residues: 8-amino-7-oxononanoate synthase (390 aa).

Position 22 (R22) interacts with substrate. 109–110 (GY) serves as a coordination point for pyridoxal 5'-phosphate. Substrate is bound at residue H134. The pyridoxal 5'-phosphate site is built by S180, H208, and T236. N6-(pyridoxal phosphate)lysine is present on K239. Position 353 (T353) interacts with substrate.

It belongs to the class-II pyridoxal-phosphate-dependent aminotransferase family. BioF subfamily. As to quaternary structure, homodimer. The cofactor is pyridoxal 5'-phosphate.

The catalysed reaction is 6-carboxyhexanoyl-[ACP] + L-alanine + H(+) = (8S)-8-amino-7-oxononanoate + holo-[ACP] + CO2. The protein operates within cofactor biosynthesis; biotin biosynthesis. In terms of biological role, catalyzes the decarboxylative condensation of pimeloyl-[acyl-carrier protein] and L-alanine to produce 8-amino-7-oxononanoate (AON), [acyl-carrier protein], and carbon dioxide. The polypeptide is 8-amino-7-oxononanoate synthase (Azoarcus sp. (strain BH72)).